The sequence spans 461 residues: Cysteine--tRNA ligase (461 aa).

Residue Cys28 participates in Zn(2+) binding. Residues 30–40 (ITVYDLCHIGH) carry the 'HIGH' region motif. Cys209, His234, and Glu238 together coordinate Zn(2+). The short motif at 266-270 (KMSKS) is the 'KMSKS' region element. Lys269 is a binding site for ATP.

Belongs to the class-I aminoacyl-tRNA synthetase family. Monomer. Zn(2+) serves as cofactor.

Its subcellular location is the cytoplasm. It catalyses the reaction tRNA(Cys) + L-cysteine + ATP = L-cysteinyl-tRNA(Cys) + AMP + diphosphate. This chain is Cysteine--tRNA ligase, found in Escherichia coli (strain SMS-3-5 / SECEC).